We begin with the raw amino-acid sequence, 404 residues long: 4-hydroxyphenylpyruvate dioxygenase (404 aa).

VOC domains lie at 28 to 163 (GYDH…FIQR) and 194 to 353 (YVDH…IFTK). Residues histidine 197, histidine 280, and glutamate 364 each coordinate Fe cation.

This sequence belongs to the 4HPPD family. The cofactor is Fe cation.

The catalysed reaction is 3-(4-hydroxyphenyl)pyruvate + O2 = homogentisate + CO2. It functions in the pathway amino-acid degradation; L-phenylalanine degradation; acetoacetate and fumarate from L-phenylalanine: step 3/6. In terms of biological role, key enzyme in the degradation of tyrosine. This is 4-hydroxyphenylpyruvate dioxygenase (TFA) from Tetrahymena thermophila.